Consider the following 333-residue polypeptide: Terminal uridylyltransferase 4 (333 aa).

UTP contacts are provided by residues Ser-54 and 65-68; that span reads SDVD. Mg(2+) contacts are provided by Asp-66 and Asp-68. Arg-121 is a binding site for RNA. UTP is bound by residues 144 to 148, Lys-169, Lys-173, and 188 to 189; these read GVRNS and SY. In terms of domain architecture, PAP-associated spans 237 to 302; it reads LGTQVLDFLH…WCIEDPYELN (66 aa).

It belongs to the DNA polymerase type-B-like family. In terms of assembly, monomer. Mg(2+) is required as a cofactor. It depends on Mn(2+) as a cofactor.

It catalyses the reaction RNA(n) + UTP = RNA(n)-3'-uridine ribonucleotide + diphosphate. With respect to regulation, the 3' uridylated RNA substrate is involved in the selective incorporation of UTP; UTP binding is favored due to the constraint posed on the positioning of the NTP base by the continuous stacking interactions between Tyr-189 side chain, the bound NTP, and the terminal nucleoside base of the RNA substrate. Its function is as follows. Terminal uridylyltransferase which, specifically, catalyzes the addition of Us to the 3'-hydroxyl group of single-stranded RNAs with a 3'-terminal U. The sequence is that of Terminal uridylyltransferase 4 from Trypanosoma brucei brucei (strain 927/4 GUTat10.1).